Here is a 153-residue protein sequence, read N- to C-terminus: 6,7-dimethyl-8-ribityllumazine synthase (153 aa).

Residues F22, A56–E58, and T80–I82 each bind 5-amino-6-(D-ribitylamino)uracil. S85–T86 is a binding site for (2S)-2-hydroxy-3-oxobutyl phosphate. The active-site Proton donor is the H88. F113 contributes to the 5-amino-6-(D-ribitylamino)uracil binding site. R127 contributes to the (2S)-2-hydroxy-3-oxobutyl phosphate binding site.

The protein belongs to the DMRL synthase family. In terms of assembly, forms an icosahedral capsid composed of 60 subunits, arranged as a dodecamer of pentamers.

It catalyses the reaction (2S)-2-hydroxy-3-oxobutyl phosphate + 5-amino-6-(D-ribitylamino)uracil = 6,7-dimethyl-8-(1-D-ribityl)lumazine + phosphate + 2 H2O + H(+). Its pathway is cofactor biosynthesis; riboflavin biosynthesis; riboflavin from 2-hydroxy-3-oxobutyl phosphate and 5-amino-6-(D-ribitylamino)uracil: step 1/2. Functionally, catalyzes the formation of 6,7-dimethyl-8-ribityllumazine by condensation of 5-amino-6-(D-ribitylamino)uracil with 3,4-dihydroxy-2-butanone 4-phosphate. This is the penultimate step in the biosynthesis of riboflavin. The sequence is that of 6,7-dimethyl-8-ribityllumazine synthase from Glaesserella parasuis serovar 5 (strain SH0165) (Haemophilus parasuis).